A 1116-amino-acid chain; its full sequence is Protein translocase subunit SecA (1116 aa).

ATP-binding positions include glutamine 176, glycine 194–threonine 198, and aspartate 693.

The protein belongs to the SecA family. Monomer and homodimer. Part of the essential Sec protein translocation apparatus which comprises SecA, SecYEG and auxiliary proteins SecDF. Other proteins may also be involved.

The protein localises to the cell inner membrane. The protein resides in the cytoplasm. It catalyses the reaction ATP + H2O + cellular proteinSide 1 = ADP + phosphate + cellular proteinSide 2.. In terms of biological role, part of the Sec protein translocase complex. Interacts with the SecYEG preprotein conducting channel. Has a central role in coupling the hydrolysis of ATP to the transfer of proteins into and across the cell membrane, serving as an ATP-driven molecular motor driving the stepwise translocation of polypeptide chains across the membrane. The sequence is that of Protein translocase subunit SecA from Amoebophilus asiaticus (strain 5a2).